Here is an 838-residue protein sequence, read N- to C-terminus: Polyribonucleotide nucleotidyltransferase (838 aa).

The Mg(2+) site is built by aspartate 494 and aspartate 500. One can recognise a KH domain in the interval 561-620 (PRMESMLIDKGKIKNVIGAGGKNVREICEKTGAKIEISQDGTVMIYAVGREAIESAKDMI). Positions 630–697 (GKIYSGEVCE…DKDHIQLSMR (68 aa)) constitute an S1 motif domain. Over residues 747–757 (GGASAGRNGRG) the composition is skewed to gly residues. The disordered stretch occupies residues 747–838 (GGASAGRNGR…PAAPKKPRFF (92 aa)). Residues 788 to 810 (AGSSGYSSDSSSGNTKSSSSESS) show a composition bias toward low complexity. Residues 811–820 (GGTGGRGRNG) show a composition bias toward gly residues.

The protein belongs to the polyribonucleotide nucleotidyltransferase family. The cofactor is Mg(2+).

Its subcellular location is the cytoplasm. It catalyses the reaction RNA(n+1) + phosphate = RNA(n) + a ribonucleoside 5'-diphosphate. In terms of biological role, involved in mRNA degradation. Catalyzes the phosphorolysis of single-stranded polyribonucleotides processively in the 3'- to 5'-direction. The polypeptide is Polyribonucleotide nucleotidyltransferase (Anaplasma phagocytophilum (strain HZ)).